A 105-amino-acid chain; its full sequence is Mini zinc finger protein 2 (105 aa).

A disordered region spans residues 1 to 29 (MGPQQDRSAAKPYANGSTAAAAAAGRKEN). The ZF-HD dimerization-type; degenerate zinc-finger motif lies at 35–84 (YRECQRNHAASIGGHAVDGCREFMASGADGTAAALLCAACGCHQSFHRRE).

Homo- and heterodimers.

The protein resides in the cytoplasm. Its function is as follows. Inhibits zinc finger homeodomain (ZHD) transcription factors, by interacting with them to prevent both their nuclear localization and their DNA-binding properties. The protein is Mini zinc finger protein 2 (MIF2) of Oryza sativa subsp. indica (Rice).